Here is a 334-residue protein sequence, read N- to C-terminus: Protein U17/U16 (334 aa).

It belongs to the herpesviridae US22 family.

Isoform 3 can transactivate the human immunodeficiency virus type 1 promoter. This Human herpesvirus 6A (strain Uganda-1102) (HHV-6 variant A) protein is Protein U17/U16 (U17/U16).